Reading from the N-terminus, the 157-residue chain is Probable succinate transporter subunit YjjB (157 aa).

The next 4 helical transmembrane spans lie at 8 to 28, 50 to 70, 87 to 107, and 129 to 149; these read LALA…AMVF, MILM…SMLV, VFTV…TAMI, and FLTA…PGLW.

Belongs to the ThrE exporter (TC 2.A.79) family. In terms of assembly, the transporter is composed of YjjB and YjjP.

Its subcellular location is the cell inner membrane. Functionally, involved in succinate export with YjjP. Both proteins are required for export. This Escherichia coli O127:H6 (strain E2348/69 / EPEC) protein is Probable succinate transporter subunit YjjB.